The primary structure comprises 208 residues: Imidazoleglycerol-phosphate dehydratase (208 aa).

This sequence belongs to the imidazoleglycerol-phosphate dehydratase family.

It is found in the cytoplasm. The enzyme catalyses D-erythro-1-(imidazol-4-yl)glycerol 3-phosphate = 3-(imidazol-4-yl)-2-oxopropyl phosphate + H2O. It participates in amino-acid biosynthesis; L-histidine biosynthesis; L-histidine from 5-phospho-alpha-D-ribose 1-diphosphate: step 6/9. The chain is Imidazoleglycerol-phosphate dehydratase from Paenarthrobacter aurescens (strain TC1).